We begin with the raw amino-acid sequence, 190 residues long: MEKKVDKNEFLNMVLLKLEEGKVFLGKHGLKINISLDNVRINSGSVSITVGDIYLKVDMRNSELVLNDLENHEVYIYSYANDEVKIRITQNTFYLYMQIDELKPVTQEVMLRAIEALRIPFSKREGLRIDIDLTQYHEIEYTSEDGLQLRYGVDDIQIKDDKLVMNGLAIDILNNDWFISFEKNVMSMIL.

This is an uncharacterized protein from Acidianus hospitalis (AFV-1).